The chain runs to 212 residues: Pyridoxine/pyridoxamine 5'-phosphate oxidase (212 aa).

Residues 8–11 (RRTY) and Lys66 contribute to the substrate site. FMN contacts are provided by residues 61-66 (RIVLLK), 76-77 (FT), Arg82, Lys83, and Gln105. The substrate site is built by Tyr123, Arg127, and Ser131. FMN contacts are provided by residues 140–141 (QS) and Trp184. Position 190–192 (190–192 (RLH)) interacts with substrate. Residue Arg194 participates in FMN binding.

It belongs to the pyridoxamine 5'-phosphate oxidase family. In terms of assembly, homodimer. FMN serves as cofactor.

The enzyme catalyses pyridoxamine 5'-phosphate + O2 + H2O = pyridoxal 5'-phosphate + H2O2 + NH4(+). It catalyses the reaction pyridoxine 5'-phosphate + O2 = pyridoxal 5'-phosphate + H2O2. The protein operates within cofactor metabolism; pyridoxal 5'-phosphate salvage; pyridoxal 5'-phosphate from pyridoxamine 5'-phosphate: step 1/1. It participates in cofactor metabolism; pyridoxal 5'-phosphate salvage; pyridoxal 5'-phosphate from pyridoxine 5'-phosphate: step 1/1. In terms of biological role, catalyzes the oxidation of either pyridoxine 5'-phosphate (PNP) or pyridoxamine 5'-phosphate (PMP) into pyridoxal 5'-phosphate (PLP). The polypeptide is Pyridoxine/pyridoxamine 5'-phosphate oxidase (Cupriavidus taiwanensis (strain DSM 17343 / BCRC 17206 / CCUG 44338 / CIP 107171 / LMG 19424 / R1) (Ralstonia taiwanensis (strain LMG 19424))).